Consider the following 306-residue polypeptide: D-alanine--D-alanine ligase (306 aa).

Residues 102–300 form the ATP-grasp domain; the sequence is KIIAASAGVS…YGDIVKWIVE (199 aa). 128–183 contacts ATP; that stretch reads PMKPPYVIKPIREGSSFGVVIVGSDETMPLHDIMNNEWVYDDEIMVEKYVPGRELT. The Mg(2+) site is built by Asp253, Glu267, and Asn269.

This sequence belongs to the D-alanine--D-alanine ligase family. Requires Mg(2+) as cofactor. Mn(2+) serves as cofactor.

The protein localises to the cytoplasm. It carries out the reaction 2 D-alanine + ATP = D-alanyl-D-alanine + ADP + phosphate + H(+). Its pathway is cell wall biogenesis; peptidoglycan biosynthesis. Functionally, cell wall formation. The polypeptide is D-alanine--D-alanine ligase (Bartonella bacilliformis (strain ATCC 35685 / KC583 / Herrer 020/F12,63)).